Here is a 44-residue protein sequence, read N- to C-terminus: Brevinin-1PLa (44 aa).

The propeptide occupies 1–18; sequence NAEEERRDEPDETDVEVE. An intrachain disulfide couples C38 to C44.

As to expression, expressed by the skin glands.

It localises to the secreted. Its function is as follows. Antimicrobial peptide. This is Brevinin-1PLa from Lithobates palustris (Pickerel frog).